The chain runs to 565 residues: Sulfite reductase [NADPH] hemoprotein beta-component (565 aa).

Residues C429, C435, C474, and C478 each contribute to the [4Fe-4S] cluster site. Residue C478 coordinates siroheme.

The protein belongs to the nitrite and sulfite reductase 4Fe-4S domain family. In terms of assembly, alpha(8)-beta(8). The alpha component is a flavoprotein, the beta component is a hemoprotein. Siroheme is required as a cofactor. The cofactor is [4Fe-4S] cluster.

The enzyme catalyses hydrogen sulfide + 3 NADP(+) + 3 H2O = sulfite + 3 NADPH + 4 H(+). The protein operates within sulfur metabolism; hydrogen sulfide biosynthesis; hydrogen sulfide from sulfite (NADPH route): step 1/1. Component of the sulfite reductase complex that catalyzes the 6-electron reduction of sulfite to sulfide. This is one of several activities required for the biosynthesis of L-cysteine from sulfate. This is Sulfite reductase [NADPH] hemoprotein beta-component from Shewanella sp. (strain W3-18-1).